The sequence spans 304 residues: Dihydroorotate dehydrogenase B (NAD(+)), catalytic subunit (304 aa).

FMN is bound by residues Ser21 and 45 to 46; that span reads KA. Substrate contacts are provided by residues Lys45 and 69–73; that span reads NAIGL. Residues Asn99 and Asn127 each coordinate FMN. Asn127 contributes to the substrate binding site. Cys130 (nucleophile) is an active-site residue. The FMN site is built by Lys165 and Ile191. 192 to 193 contributes to the substrate binding site; it reads NT. Residues Gly217, 243–244, and 265–266 each bind FMN; these read GG and GT.

This sequence belongs to the dihydroorotate dehydrogenase family. Type 1 subfamily. In terms of assembly, heterotetramer of 2 PyrK and 2 PyrD type B subunits. FMN serves as cofactor.

The protein localises to the cytoplasm. It carries out the reaction (S)-dihydroorotate + NAD(+) = orotate + NADH + H(+). Its pathway is pyrimidine metabolism; UMP biosynthesis via de novo pathway; orotate from (S)-dihydroorotate (NAD(+) route): step 1/1. Its function is as follows. Catalyzes the conversion of dihydroorotate to orotate with NAD(+) as electron acceptor. The sequence is that of Dihydroorotate dehydrogenase B (NAD(+)), catalytic subunit (pyrD) from Listeria welshimeri serovar 6b (strain ATCC 35897 / DSM 20650 / CCUG 15529 / CIP 8149 / NCTC 11857 / SLCC 5334 / V8).